Reading from the N-terminus, the 259-residue chain is Borneol dehydrogenase, mitochondrial (259 aa).

Residues 1–30 (MASTVLRRLEGKVALITGAASGIGESAARL) constitute a mitochondrion transit peptide. NAD(+)-binding positions include 21 to 23 (SGI), Asp42, 63 to 64 (DV), and 90 to 92 (NAG). Ser144 (proton donor) is an active-site residue. Substrate contacts are provided by Ser144 and Tyr157. 3 residues coordinate NAD(+): Tyr157, Lys161, and Thr192. The Proton acceptor role is filled by Tyr157. The active-site Proton donor/acceptor is the Lys161.

The protein belongs to the short-chain dehydrogenases/reductases (SDR) family. In terms of tissue distribution, specifically expressed in glandular trichomes of mature flowers.

It is found in the mitochondrion. The catalysed reaction is borneol + NAD(+) = camphor + NADH + H(+). It participates in secondary metabolite biosynthesis; terpenoid biosynthesis. Involved in the biosynthesis of monoterpenes natural products related to camphor. Catalyzes the conversion of borneol into camphor. The protein is Borneol dehydrogenase, mitochondrial of Lavandula x intermedia (Lavandin).